The sequence spans 467 residues: Glutamyl-tRNA reductase (467 aa).

Substrate contacts are provided by residues 49–52 (TCNR), S109, 114–116 (EQQ), and Q120. C50 (nucleophile) is an active-site residue. Residue 189-194 (GAGAMG) coordinates NADP(+). The interval 446-467 (GFSDTTRYGTSPAQSSSKYHAE) is disordered. Residues 447-467 (FSDTTRYGTSPAQSSSKYHAE) show a composition bias toward polar residues.

The protein belongs to the glutamyl-tRNA reductase family. As to quaternary structure, homodimer.

The catalysed reaction is (S)-4-amino-5-oxopentanoate + tRNA(Glu) + NADP(+) = L-glutamyl-tRNA(Glu) + NADPH + H(+). Its pathway is porphyrin-containing compound metabolism; protoporphyrin-IX biosynthesis; 5-aminolevulinate from L-glutamyl-tRNA(Glu): step 1/2. In terms of biological role, catalyzes the NADPH-dependent reduction of glutamyl-tRNA(Glu) to glutamate 1-semialdehyde (GSA). This Mycobacterium leprae (strain TN) protein is Glutamyl-tRNA reductase.